A 548-amino-acid chain; its full sequence is Chaperonin GroEL (548 aa).

ATP-binding positions include 30-33 (TLGP), Lys-51, 87-91 (DGTTT), Gly-415, 479-481 (NAA), and Asp-495. The segment at 524–548 (LPKEDKSSDSNSSPAGGMGGMGGMM) is disordered. Over residues 539-548 (GGMGGMGGMM) the composition is skewed to gly residues.

The protein belongs to the chaperonin (HSP60) family. In terms of assembly, forms a cylinder of 14 subunits composed of two heptameric rings stacked back-to-back. Interacts with the co-chaperonin GroES.

It localises to the cytoplasm. It carries out the reaction ATP + H2O + a folded polypeptide = ADP + phosphate + an unfolded polypeptide.. Its function is as follows. Together with its co-chaperonin GroES, plays an essential role in assisting protein folding. The GroEL-GroES system forms a nano-cage that allows encapsulation of the non-native substrate proteins and provides a physical environment optimized to promote and accelerate protein folding. This Buchnera aphidicola subsp. Myzus persicae (Myzus persicae primary endosymbiont) protein is Chaperonin GroEL.